A 122-amino-acid chain; its full sequence is Large ribosomal subunit protein eL34 (122 aa).

It belongs to the eukaryotic ribosomal protein eL34 family.

This chain is Large ribosomal subunit protein eL34 (rpl34), found in Dictyostelium discoideum (Social amoeba).